We begin with the raw amino-acid sequence, 45 residues long: Monellin chain A (45 aa).

In terms of assembly, heterodimer of an A chain and a B chain.

Taste-modifying protein; intensely sweet-tasting protein. This Dioscoreophyllum cumminsii (Serendipity berry) protein is Monellin chain A.